Reading from the N-terminus, the 353-residue chain is Melanin-concentrating hormone receptor 1 (353 aa).

The Extracellular segment spans residues 1 to 45 (MDLQASLLSTGPNASNISDGQDNFTLAGPPPRTRSVSYINIIMPS). 3 N-linked (GlcNAc...) asparagine glycosylation sites follow: asparagine 13, asparagine 16, and asparagine 23. Residues 46 to 66 (VFGTICLLGIVGNSTVIFAVV) traverse the membrane as a helical segment. The Cytoplasmic segment spans residues 67–79 (KKSKLHWCSNVPD). The chain crosses the membrane as a helical span at residues 80 to 100 (IFIINLSVVDLLFLLGMPFMI). At 101-116 (HQLMGNGVWHFGETMC) the chain is on the extracellular side. The cysteines at positions 116 and 194 are disulfide-linked. A helical membrane pass occupies residues 117–139 (TLITAMDANSQFTSTYILTAMAI). Residues 140–161 (DRYLATVHPISSTKFRKPSMAT) lie on the Cytoplasmic side of the membrane. Residues 162–182 (LVICLLWALSFISITPVWLYA) traverse the membrane as a helical segment. Residues 183 to 204 (RLIPFPGGAVGCGIRLPNPDTD) lie on the Extracellular side of the membrane. A helical transmembrane segment spans residues 205–225 (LYWFTLYQFFLAFALPFVVIT). Residues 226-256 (AAYVKILQRMTSSVAPASQRSIRLRTKRVTR) are Cytoplasmic-facing. A helical membrane pass occupies residues 257-277 (TAIAICLVFFVCWAPYYVLQL). Residues 278–294 (TQLSISRPTLTFVYLYN) are Extracellular-facing. Residues 295 to 315 (AAISLGYANSCLNPFVYIVLC) form a helical membrane-spanning segment. Residues 316-353 (ETFRKRLVLSVKPAAQGQLRTVSNAQTADEERTESKGT) lie on the Cytoplasmic side of the membrane.

The protein belongs to the G-protein coupled receptor 1 family. As to quaternary structure, interacts with NCDN. As to expression, expressed predominantly in the brain. Expression in brain is negatively regulated by leptin. Also found in the epithelium of the tongue and kidney.

It localises to the cell membrane. Its function is as follows. Receptor for melanin-concentrating hormone, coupled to both G proteins that inhibit adenylyl cyclase and G proteins that activate phosphoinositide hydrolysis. This chain is Melanin-concentrating hormone receptor 1, found in Mus musculus (Mouse).